The chain runs to 63 residues: Translational regulator CsrA (63 aa).

This sequence belongs to the CsrA/RsmA family. Homodimer; the beta-strands of each monomer intercalate to form a hydrophobic core, while the alpha-helices form wings that extend away from the core.

Its subcellular location is the cytoplasm. In terms of biological role, a key translational regulator that binds mRNA to regulate translation initiation and/or mRNA stability. Mediates global changes in gene expression, shifting from rapid growth to stress survival by linking envelope stress, the stringent response and the catabolite repression systems. Usually binds in the 5'-UTR; binding at or near the Shine-Dalgarno sequence prevents ribosome-binding, repressing translation, binding elsewhere in the 5'-UTR can activate translation and/or stabilize the mRNA. Its function is antagonized by small RNA(s). In Alteromonas mediterranea (strain DSM 17117 / CIP 110805 / LMG 28347 / Deep ecotype), this protein is Translational regulator CsrA.